The following is a 138-amino-acid chain: Nanos homolog 2 (138 aa).

A disordered region spans residues 31–55; sequence ETQEIEEPSPGPPLGQDQGLGAPGA. The Nanos-type zinc finger occupies 62–116; it reads LCNFCKHNGESRHVYSSHQLKTPDGVVVCPILRHYVCPVCGATGDQAHTLKYCPL. Zn(2+)-binding residues include Cys-63, Cys-66, His-79, Cys-90, Cys-98, Cys-101, His-109, and Cys-114. Short sequence motifs (C2HC) lie at residues 63-90 and 98-114; these read CNFC…VVVC and CPVC…LKYC.

It belongs to the nanos family. As to quaternary structure, interacts with CNOT1, CNOT3, CNOT6L, CNOT7 and CNOT9. Testis and ovary. Expression found in several spermatogenic stages: in cells on the periphery of the tubules which could correspond to spermatogonia, in spermatocytes and in round spermatids (at protein level).

Its subcellular location is the cytoplasm. It localises to the P-body. The protein resides in the perinuclear region. Plays a key role in the sexual differentiation of germ cells by promoting the male fate but suppressing the female fate. Represses the female fate pathways by suppressing meiosis, which in turn results in the promotion of the male fate. Maintains the suppression of meiosis by preventing STRA8 expression, which is required for premeiotic DNA replication, after CYP26B1 is decreased. Regulates the localization of the CCR4-NOT deadenylation complex to P-bodies and plays a role in recruiting the complex to trigger the degradation of mRNAs involved in meiosis. Required for the maintenance of the spermatogonial stem cell population. Not essential for the assembly of P-bodies but is required for the maintenance of their normal state. The protein is Nanos homolog 2 (NANOS2) of Homo sapiens (Human).